Here is a 702-residue protein sequence, read N- to C-terminus: Elongation factor G (702 aa).

Positions 8-196 constitute a tr-type G domain; the sequence is ERYRNIGISA…MKAIIWDEAS (189 aa). Residues 17–24, 88–92, and 142–145 each bind GTP; these read AHIDAGKT, DTPGH, and NKMD.

It belongs to the TRAFAC class translation factor GTPase superfamily. Classic translation factor GTPase family. EF-G/EF-2 subfamily.

The protein resides in the cytoplasm. In terms of biological role, catalyzes the GTP-dependent ribosomal translocation step during translation elongation. During this step, the ribosome changes from the pre-translocational (PRE) to the post-translocational (POST) state as the newly formed A-site-bound peptidyl-tRNA and P-site-bound deacylated tRNA move to the P and E sites, respectively. Catalyzes the coordinated movement of the two tRNA molecules, the mRNA and conformational changes in the ribosome. The protein is Elongation factor G (fusA) of Thiomonas delicata (Thiomonas cuprina).